A 217-amino-acid polypeptide reads, in one-letter code: Salivary glue protein Sgs-3 (217 aa).

The signal sequence occupies residues 1–23 (MKLTIATVLASILLIGFANVANC). Positions 45 to 130 (KSTSTTTTTT…KPTTHSTPKT (86 aa)) are enriched in low complexity. The segment at 45 to 163 (KSTSTTTTTT…KHTTPTTTTT (119 aa)) is disordered. Positions 131 to 154 (KPTKHTTPKTKPTKHTTPKTKPTK) are enriched in basic residues.

This is Salivary glue protein Sgs-3 (Sgs3) from Drosophila simulans (Fruit fly).